Consider the following 292-residue polypeptide: 5,10-methylenetetrahydrofolate reductase (292 aa).

Catalysis depends on E28, which acts as the Proton donor/acceptor. An NADH-binding site is contributed by T59. Positions 60, 62, 88, 118, 119, 120, 132, 152, 156, 165, 168, 171, and 172 each coordinate FAD. D120 serves as a coordination point for (6S)-5-methyl-5,6,7,8-tetrahydrofolate. An NADH-binding site is contributed by Q183. (6S)-5-methyl-5,6,7,8-tetrahydrofolate is bound by residues Q183, Q219, and K279.

It belongs to the methylenetetrahydrofolate reductase family. FAD is required as a cofactor.

It carries out the reaction (6S)-5-methyl-5,6,7,8-tetrahydrofolate + NAD(+) = (6R)-5,10-methylene-5,6,7,8-tetrahydrofolate + NADH + H(+). It participates in one-carbon metabolism; tetrahydrofolate interconversion. Its pathway is amino-acid biosynthesis; L-methionine biosynthesis via de novo pathway. In terms of biological role, catalyzes the NADH-dependent reduction of 5,10-methylenetetrahydrofolate to 5-methyltetrahydrofolate. Is required to provide the methyl group necessary for methionine synthetase to convert homocysteine to methionine; the methyl group is given by 5-methyltetrahydrofolate. The chain is 5,10-methylenetetrahydrofolate reductase (metF) from Buchnera aphidicola subsp. Schizaphis graminum (strain Sg).